We begin with the raw amino-acid sequence, 364 residues long: Protein FAM81A (364 aa).

Positions 80 to 107 (IRNITAIVKQLNRDIEVLQEQIRARDNI) form a coiled coil. Residues 275 to 300 (ARLDKIEESQRRNAEGQRKPEEEKVH) are compositionally biased toward basic and acidic residues. Residues 275–301 (ARLDKIEESQRRNAEGQRKPEEEKVHG) are disordered.

Belongs to the FAM81 family. Interacts with DLG4/PSD-95, GRIN2B/GLUN2B and SYNGAP1; the interactions facilitate condensate formation. In terms of tissue distribution, highly expressed in brain (at protein level).

It is found in the postsynaptic density. The protein localises to the cytoplasm. Functionally, facilitates the interaction and assembly of proteins within the postsynaptic density by promoting the condensation of postsynaptic proteins via liquid-liquid phase separation. Required for neuronal activity. Accumulation at the postsynaptic density results in enlargement of dendritic spines. The sequence is that of Protein FAM81A from Rattus norvegicus (Rat).